Reading from the N-terminus, the 129-residue chain is Small ribosomal subunit protein uS12 (129 aa).

Asp-89 carries the 3-methylthioaspartic acid modification. A disordered region spans residues 101-129 (SLDTSGVADRKQSRSKYGAKQPKAGAAKK). Low complexity predominate over residues 116 to 129 (KYGAKQPKAGAAKK).

It belongs to the universal ribosomal protein uS12 family. As to quaternary structure, part of the 30S ribosomal subunit. Contacts proteins S8 and S17. May interact with IF1 in the 30S initiation complex.

With S4 and S5 plays an important role in translational accuracy. Functionally, interacts with and stabilizes bases of the 16S rRNA that are involved in tRNA selection in the A site and with the mRNA backbone. Located at the interface of the 30S and 50S subunits, it traverses the body of the 30S subunit contacting proteins on the other side and probably holding the rRNA structure together. The combined cluster of proteins S8, S12 and S17 appears to hold together the shoulder and platform of the 30S subunit. This chain is Small ribosomal subunit protein uS12, found in Chlorobaculum parvum (strain DSM 263 / NCIMB 8327) (Chlorobium vibrioforme subsp. thiosulfatophilum).